We begin with the raw amino-acid sequence, 351 residues long: Autoinducer 2 import system permease protein LsrC (351 aa).

A run of 9 helical transmembrane segments spans residues 14 to 34 (LLAILTLFALLGIIDRNYFSL), 39 to 59 (MIFSSAQILILLAIGATLVML), 70 to 90 (ITGLCAVTVGMALNAGFGLVA), 93 to 113 (LFALLVGMVAGFFNGILVTWL), 115 to 135 (IPAIVATLGTLGLYRGLMLLL), 155 to 175 (ILFSISPIGWLTMLLILSMAW), 213 to 233 (MNGVMAALAGIVFASQIGFIP), 252 to 272 (GISLLGGTGTIIGAILGAFLL), and 284 to 304 (LPAWWNDFIAGLVLLGVLVFD).

It belongs to the binding-protein-dependent transport system permease family. AraH/RbsC subfamily. In terms of assembly, the complex is composed of two ATP-binding proteins (LsrA), two transmembrane proteins (LsrC and LsrD) and a solute-binding protein (LsrB).

The protein localises to the cell inner membrane. Its function is as follows. Part of the ABC transporter complex LsrABCD involved in autoinducer 2 (AI-2) import. Probably responsible for the translocation of the substrate across the membrane. This Yersinia pseudotuberculosis serotype IB (strain PB1/+) protein is Autoinducer 2 import system permease protein LsrC (lsrC).